We begin with the raw amino-acid sequence, 395 residues long: Phosphoglycerate kinase (395 aa).

Residues Asp21–Asn23, Arg36, His59–Arg62, Arg113, and Arg146 each bind substrate. ATP-binding positions include Lys197, Glu324, and Gly350–Thr353.

This sequence belongs to the phosphoglycerate kinase family. Monomer.

The protein localises to the cytoplasm. The catalysed reaction is (2R)-3-phosphoglycerate + ATP = (2R)-3-phospho-glyceroyl phosphate + ADP. Its pathway is carbohydrate degradation; glycolysis; pyruvate from D-glyceraldehyde 3-phosphate: step 2/5. This chain is Phosphoglycerate kinase, found in Acinetobacter baumannii (strain AB307-0294).